Consider the following 91-residue polypeptide: Defensin-like protein 95 (91 aa).

A signal peptide spans 1-27 (MGSLKLSTFAIVVCLSILLISPIEVNG). 4 cysteine pairs are disulfide-bonded: cysteine 31/cysteine 76, cysteine 38/cysteine 63, cysteine 47/cysteine 73, and cysteine 51/cysteine 75.

Belongs to the DEFL family.

It is found in the secreted. The polypeptide is Defensin-like protein 95 (Arabidopsis thaliana (Mouse-ear cress)).